The following is a 171-amino-acid chain: Co-chaperone protein HscB (171 aa).

The J domain occupies aspartate 2–leucine 74.

The protein belongs to the HscB family. In terms of assembly, interacts with HscA and stimulates its ATPase activity. Interacts with IscU.

In terms of biological role, co-chaperone involved in the maturation of iron-sulfur cluster-containing proteins. Seems to help targeting proteins to be folded toward HscA. In Salmonella schwarzengrund (strain CVM19633), this protein is Co-chaperone protein HscB.